The chain runs to 370 residues: Anhydro-N-acetylmuramic acid kinase (370 aa).

13–20 contacts ATP; it reads GTSMDGVD.

The protein belongs to the anhydro-N-acetylmuramic acid kinase family.

It catalyses the reaction 1,6-anhydro-N-acetyl-beta-muramate + ATP + H2O = N-acetyl-D-muramate 6-phosphate + ADP + H(+). Its pathway is amino-sugar metabolism; 1,6-anhydro-N-acetylmuramate degradation. The protein operates within cell wall biogenesis; peptidoglycan recycling. Its function is as follows. Catalyzes the specific phosphorylation of 1,6-anhydro-N-acetylmuramic acid (anhMurNAc) with the simultaneous cleavage of the 1,6-anhydro ring, generating MurNAc-6-P. Is required for the utilization of anhMurNAc either imported from the medium or derived from its own cell wall murein, and thus plays a role in cell wall recycling. This chain is Anhydro-N-acetylmuramic acid kinase, found in Shewanella frigidimarina (strain NCIMB 400).